The chain runs to 1167 residues: White collar 1 protein (1167 aa).

2 disordered regions span residues 1–91 (MNNN…MSGG) and 307–355 (STPA…GASQ). The segment covering 21-57 (QHQQQQQQQQQQQQQQQQQQQQQQQQQQQQHQHQQQQ) has biased composition (low complexity). 2 stretches are compositionally biased toward polar residues: residues 70 to 91 (TPPT…MSGG) and 307 to 325 (STPA…TQTI). The segment covering 335 to 348 (VTNAPTPAPFTSTP) has biased composition (low complexity). Residues 381–452 (KLKLGAVDMS…KREFVENNAV (72 aa)) enclose the PAS 1 domain. Cysteine 428 bears the S-4a-FMN cysteine mark. A PAC 1 domain is found at 469 to 508 (LINYRKGGKPFLNLLTMIPIPWDTEEIRYFIGFQIDLVEC). A PAS 2 domain is found at 574–644 (KQSWDKMLLE…RELKEAQQHT (71 aa)). The region spanning 650–691 (FRIRRKNSGYTWFESHGTLFNEQGKGRKCIILVGRKRPVFAL) is the PAC 2 domain. A PAS 3 domain is found at 693 to 763 (RKDLELNGGI…RTIEKARKGK (71 aa)). A compositionally biased stretch (low complexity) spans 849–861 (MSKSGSSDSTGAM). Disordered stretches follow at residues 849-872 (MSKS…GPGQ), 918-952 (KKKR…PSGN), 966-1047 (QTGR…TGST), and 1060-1167 (VNAL…GLSV). The GATA-type zinc finger occupies 934 to 959 (CANCHTRNTPEWRRGPSGNRDLCNSC). Over residues 968-977 (GRVSPRTSSR) the composition is skewed to polar residues. A compositionally biased stretch (low complexity) spans 986–995 (KKSNSPSHSS). The segment covering 1004–1033 (DSPSTTTATKNSPSLRGSSTTAPGTITTDS) has biased composition (polar residues). Low complexity-rich tracts occupy residues 1036-1047 (AVASSASGTGST) and 1104-1128 (QHQQ…QQHQ).

In terms of assembly, heterodimer of wc-1 and wc-2. Post-translationally, FMN binds covalently to cysteine after exposure to blue light and is reversed in the dark.

It is found in the nucleus. Its function is as follows. May function as a transcription factor involved in light regulation. Binds and affects blue light regulation of the al-3 gene. Wc-1 and wc-2 proteins interact via homologous PAS domains, bind to promoters of light regulated genes such as frq, and activate transcription. The sequence is that of White collar 1 protein (wc-1) from Neurospora crassa (strain ATCC 24698 / 74-OR23-1A / CBS 708.71 / DSM 1257 / FGSC 987).